Consider the following 390-residue polypeptide: S-adenosylmethionine synthase 3 (390 aa).

Glu9 contacts Mg(2+). His15 contributes to the ATP binding site. Glu43 provides a ligand contact to K(+). Positions 56 and 99 each coordinate L-methionine. Residues 167 to 169 (DGK), 235 to 238 (SGRF), Asp246, 252 to 253 (RK), Ala269, Lys273, and Lys277 contribute to the ATP site. Asp246 serves as a coordination point for L-methionine. L-methionine is bound at residue Lys277.

The protein belongs to the AdoMet synthase family. Homotetramer. It depends on Mn(2+) as a cofactor. Requires Mg(2+) as cofactor. Co(2+) is required as a cofactor. The cofactor is K(+). NH4(+) serves as cofactor. Mostly expressed in roots, and, to a lower extent, in hypocotyls and cotyledons.

It is found in the cytoplasm. It catalyses the reaction L-methionine + ATP + H2O = S-adenosyl-L-methionine + phosphate + diphosphate. It functions in the pathway amino-acid biosynthesis; S-adenosyl-L-methionine biosynthesis; S-adenosyl-L-methionine from L-methionine: step 1/1. Its activity is regulated as follows. Inhibited by products of SAMS reaction (SAM, Pi, PPi), substrate analogs (cycloleucine and ethionine), and alternative nucleotides (GTP, CTP and ADP). Strongly repressed by PPPi. Its function is as follows. Catalyzes the formation of S-adenosylmethionine from methionine and ATP. The reaction comprises two steps that are both catalyzed by the same enzyme: formation of S-adenosylmethionine (AdoMet) and triphosphate, and subsequent hydrolysis of the triphosphate. The sequence is that of S-adenosylmethionine synthase 3 (SAMS3) from Catharanthus roseus (Madagascar periwinkle).